Here is a 504-residue protein sequence, read N- to C-terminus: Histidine ammonia-lyase (504 aa).

A cross-link (5-imidazolinone (Ala-Gly)) is located at residues 142-144 (ASG). Position 143 is a 2,3-didehydroalanine (Ser) (S143).

The protein belongs to the PAL/histidase family. Contains an active site 4-methylidene-imidazol-5-one (MIO), which is formed autocatalytically by cyclization and dehydration of residues Ala-Ser-Gly.

The protein localises to the cytoplasm. It carries out the reaction L-histidine = trans-urocanate + NH4(+). Its pathway is amino-acid degradation; L-histidine degradation into L-glutamate; N-formimidoyl-L-glutamate from L-histidine: step 1/3. This Staphylococcus aureus (strain MRSA252) protein is Histidine ammonia-lyase.